Here is a 533-residue protein sequence, read N- to C-terminus: Lymphocyte cytosolic protein 2 (533 aa).

Residues 15–81 form the SAM domain; sequence WDPDSLADYF…INKNEERRSI (67 aa). Y23 carries the phosphotyrosine modification. A disordered region spans residues 78–417; sequence RRSIFTRKPQ…PPSPAEEENS (340 aa). Over residues 108-155 the composition is skewed to acidic residues; sequence FEEDDYESPNDDQDGEDDGDYESPNEEEEAPVEDDADYEPPPSNDEEA. Pro residues predominate over residues 184 to 213; that stretch reads QQPPVPPQRPMAALPPPPAGRNHSPLPPPQ. Residue S207 is modified to Phosphoserine. Polar residues-rich tracts occupy residues 337–350 and 365–376; these read MSSNTFPSRSTKPS and SESNSSFPQSAS. Phosphoserine occurs at positions 376 and 410. Residues 400 to 411 show a composition bias toward pro residues; that stretch reads LPLPNKPRPPSP. One can recognise an SH2 domain in the interval 422 to 530; sequence WYVSYITRPE…RYQCTLTHAA (109 aa).

Interacts with SLA. Interacts with CBLB. Interacts with GRB2. Interacts with SHB. Interacts with PRAM1. Interacts (via SH2 domain) with CD6 (via tyrosine phosphorylated C-terminus). Interacts with FYB1 and the phosphorylated form of FYB2. Interacts with 14-3-3 adapter/YWHAZ; this phosphorylation leads to YWHAZ proteolytic degradation. Interacts with VAV1; this interaction plays a role in TCR-mediated cytokine production. Interacts with AGER; this interaction plays an important role in AGER-mediated pro-inflammatory responses and cytokine release. Phosphorylated after T-cell receptor activation by ZAP70, ITK and TXK, which leads to the up-regulation of Th1 preferred cytokine IL-2. SYK-dependent phosphorylation is required for recruitment of PI3K signaling components. As to expression, highly expressed in spleen, thymus and peripheral blood leukocytes. Highly expressed also in T-cell and monocytic cell lines, expressed at lower level in B-cell lines. Not detected in fibroblast or neuroblastoma cell lines.

It is found in the cytoplasm. Functionally, adapter protein primarily involved in signaling pathways within T-cells, as well as other immune cells such as platelets, mast cells, and natural killer (NK) cells. Plays a crucial role for transducing signal from the T-cell receptor (TCR) after antigen recognition leading to T-cell activation. Mechanistically, once phosphorylated by the kinase ZAP70, mediates interactions with the guanine-nucleotide exchange factor VAV1, the adapter protein NCK and the kinase ITK. In turn, stimulates the activation of PKC-theta/PRKCQ and NF-kappa-B transcriptional activity in response to CD3 and CD28 costimulation. Also plays an essential role in AGER-induced signaling pathways including p38 MAPK and ERK1/2 activation leading to cytokine release and pro-inflammatory responses. The sequence is that of Lymphocyte cytosolic protein 2 (LCP2) from Homo sapiens (Human).